Here is an 84-residue protein sequence, read N- to C-terminus: Putative regulatory protein Dde_2720 (84 aa).

The protein belongs to the RemA family.

The protein is Putative regulatory protein Dde_2720 of Oleidesulfovibrio alaskensis (strain ATCC BAA-1058 / DSM 17464 / G20) (Desulfovibrio alaskensis).